We begin with the raw amino-acid sequence, 242 residues long: uncharacterized protein (242 aa).

Residues 2–62 (EKAYKLLSVQ…VEKPSVIFED (61 aa)) form the S4 RNA-binding domain. Residue Asp-93 is part of the active site.

Belongs to the pseudouridine synthase RluA family.

It catalyses the reaction a uridine in RNA = a pseudouridine in RNA. This is an uncharacterized protein from Helicobacter pylori (strain J99 / ATCC 700824) (Campylobacter pylori J99).